A 161-amino-acid polypeptide reads, in one-letter code: Phosphopantetheine adenylyltransferase (161 aa).

T10 serves as a coordination point for substrate. Residues 10-11 (TF) and H18 each bind ATP. The substrate site is built by K42, M74, and R88. Residues 89 to 91 (GLR), E99, and 124 to 130 (WSFISSS) contribute to the ATP site.

Belongs to the bacterial CoaD family. In terms of assembly, homohexamer. Mg(2+) serves as cofactor.

It localises to the cytoplasm. The enzyme catalyses (R)-4'-phosphopantetheine + ATP + H(+) = 3'-dephospho-CoA + diphosphate. It functions in the pathway cofactor biosynthesis; coenzyme A biosynthesis; CoA from (R)-pantothenate: step 4/5. Reversibly transfers an adenylyl group from ATP to 4'-phosphopantetheine, yielding dephospho-CoA (dPCoA) and pyrophosphate. The sequence is that of Phosphopantetheine adenylyltransferase from Serratia proteamaculans (strain 568).